Reading from the N-terminus, the 53-residue chain is UPF0391 membrane protein PputGB1_0151 (53 aa).

2 consecutive transmembrane segments (helical) span residues 4–24 (WAIT…GGIA) and 29–49 (GIAK…FFFG).

The protein belongs to the UPF0391 family.

The protein localises to the cell membrane. This chain is UPF0391 membrane protein PputGB1_0151, found in Pseudomonas putida (strain GB-1).